Here is a 171-residue protein sequence, read N- to C-terminus: 3-hydroxydecanoyl-[acyl-carrier-protein] dehydratase (171 aa).

His-70 is a catalytic residue.

This sequence belongs to the thioester dehydratase family. FabA subfamily. Homodimer.

The protein resides in the cytoplasm. It catalyses the reaction a (3R)-hydroxyacyl-[ACP] = a (2E)-enoyl-[ACP] + H2O. It carries out the reaction (3R)-hydroxydecanoyl-[ACP] = (2E)-decenoyl-[ACP] + H2O. The enzyme catalyses (2E)-decenoyl-[ACP] = (3Z)-decenoyl-[ACP]. It participates in lipid metabolism; fatty acid biosynthesis. Functionally, necessary for the introduction of cis unsaturation into fatty acids. Catalyzes the dehydration of (3R)-3-hydroxydecanoyl-ACP to E-(2)-decenoyl-ACP and then its isomerization to Z-(3)-decenoyl-ACP. Can catalyze the dehydratase reaction for beta-hydroxyacyl-ACPs with saturated chain lengths up to 16:0, being most active on intermediate chain length. This is 3-hydroxydecanoyl-[acyl-carrier-protein] dehydratase from Shewanella halifaxensis (strain HAW-EB4).